The chain runs to 575 residues: Inactive terpenoid synthase 20, chloroplastic (575 aa).

A chloroplast-targeting transit peptide spans 1–52; it reads MEAITKNGSLSQTLVHCGPKSLSSFIPVRCLRFSKNPFPKKLVVTRARTSIN. The Mg(2+) site is built by aspartate 332, aspartate 336, aspartate 474, threonine 478, and glutamate 482. The short motif at 332 to 336 is the DDXXD motif element; it reads DDLYD.

Belongs to the terpene synthase family. Tpsa subfamily. As to expression, predominantly expressed in roots but also in leaves and stems.

It localises to the plastid. The protein resides in the chloroplast. In terms of biological role, does not possess diterpene synthase activity. In Arabidopsis thaliana (Mouse-ear cress), this protein is Inactive terpenoid synthase 20, chloroplastic.